Reading from the N-terminus, the 367-residue chain is Uracil nucleotide/cysteinyl leukotriene receptor (367 aa).

A disordered region spans residues 1 to 28; sequence MSKRSWWAGSRKPPREMLKLSGSDSSQS. Residues 1–64 lie on the Extracellular side of the membrane; it reads MSKRSWWAGS…TPLENMLFAS (64 aa). N-linked (GlcNAc...) asparagine glycosylation is present at Asn-42. A helical transmembrane segment spans residues 65 to 85; that stretch reads FYLLDFILALVGNTLALWLFI. Residues 86–92 are Cytoplasmic-facing; sequence RDHKSGT. Residues 93–113 traverse the membrane as a helical segment; sequence PANVFLMHLAVADLSCVLVLP. At 114–133 the chain is on the extracellular side; it reads TRLVYHFSGNHWPFGEIACR. Residues Cys-132 and Cys-209 are joined by a disulfide bond. The chain crosses the membrane as a helical span at residues 134 to 154; that stretch reads LTGFLFYLNMYASIYFLTCIS. Over 155-175 the chain is Cytoplasmic; the sequence is ADRFLAIVHPVKSLKLRRPLY. A helical membrane pass occupies residues 176–196; it reads AHLACAFLWVVVAVAMAPLLV. The Extracellular segment spans residues 197 to 223; the sequence is SPQTVQTNHTVVCLQLYREKASHHALV. Asn-204 carries an N-linked (GlcNAc...) asparagine glycan. Residues 224-244 traverse the membrane as a helical segment; that stretch reads SLAVAFTFPFITTVTCYLLII. Over 245–260 the chain is Cytoplasmic; the sequence is RSLRQGLRVEKRLKTK. Residues 261–281 form a helical membrane-spanning segment; it reads AVRMIAIVLAIFLVCFVPYHV. Asn-282 is a glycosylation site (N-linked (GlcNAc...) asparagine). Residues 282 to 308 lie on the Extracellular side of the membrane; it reads NRSVYVLHYRSHGASCATQRILALANR. Residues 309 to 329 form a helical membrane-spanning segment; it reads ITSCLTSLNGALDPIMYFFVA. Residues 330–367 are Cytoplasmic-facing; that stretch reads EKFRHALCNLLCGKRLKGPPPSFEGKTNESSLSAKSEL.

It belongs to the G-protein coupled receptor 1 family. In terms of tissue distribution, expressed in brain, kidney, heart and umbilical vein endothelial cells. Highest level in brain.

It localises to the cell membrane. Functionally, dual specificity receptor for uracil nucleotides and cysteinyl leukotrienes (CysLTs). Signals through G(i) and inhibition of adenylyl cyclase. May mediate brain damage by nucleotides and CysLTs following ischemia. The polypeptide is Uracil nucleotide/cysteinyl leukotriene receptor (GPR17) (Homo sapiens (Human)).